We begin with the raw amino-acid sequence, 25 residues long: Pregnancy-associated glycoprotein 72 (25 aa).

N4 and N21 each carry an N-linked (GlcNAc...) asparagine glycan.

The protein belongs to the peptidase A1 family. In terms of processing, N-glycosylated. In terms of tissue distribution, expressed in chorionic epithelium (trophectoderm).

Its subcellular location is the secreted. It is found in the extracellular space. This chain is Pregnancy-associated glycoprotein 72, found in Bison bison (American bison).